The sequence spans 134 residues: Protein NrdI (134 aa).

Belongs to the NrdI family.

In terms of biological role, probably involved in ribonucleotide reductase function. The polypeptide is Protein NrdI (Rhizobium leguminosarum bv. trifolii (strain WSM2304)).